Here is a 256-residue protein sequence, read N- to C-terminus: Enolase-phosphatase E1 (256 aa).

The Mg(2+) site is built by aspartate 14 and glutamate 16. Residues 142–143 (SS) and lysine 176 contribute to the substrate site. A Mg(2+)-binding site is contributed by aspartate 201.

This sequence belongs to the HAD-like hydrolase superfamily. MasA/MtnC family. In terms of assembly, monomer. The cofactor is Mg(2+).

The protein localises to the cytoplasm. Its subcellular location is the nucleus. It catalyses the reaction 5-methylsulfanyl-2,3-dioxopentyl phosphate + H2O = 1,2-dihydroxy-5-(methylsulfanyl)pent-1-en-3-one + phosphate. Its pathway is amino-acid biosynthesis; L-methionine biosynthesis via salvage pathway; L-methionine from S-methyl-5-thio-alpha-D-ribose 1-phosphate: step 3/6. It participates in amino-acid biosynthesis; L-methionine biosynthesis via salvage pathway; L-methionine from S-methyl-5-thio-alpha-D-ribose 1-phosphate: step 4/6. Its function is as follows. Bifunctional enzyme that catalyzes the enolization of 2,3-diketo-5-methylthiopentyl-1-phosphate (DK-MTP-1-P) into the intermediate 2-hydroxy-3-keto-5-methylthiopentenyl-1-phosphate (HK-MTPenyl-1-P), which is then dephosphorylated to form the acireductone 1,2-dihydroxy-3-keto-5-methylthiopentene (DHK-MTPene). The chain is Enolase-phosphatase E1 from Drosophila simulans (Fruit fly).